The sequence spans 847 residues: Protein HIR2 (847 aa).

WD repeat units lie at residues L10–T46, K113–S153, E155–L194, K259–D305, and V309–V348. The interval P368–A399 is disordered. Positions K384–K394 are enriched in polar residues. 2 WD repeats span residues R508–T548 and P558–P597.

The protein belongs to the WD repeat HIR1 family.

The protein localises to the nucleus. Required for replication-independent chromatin assembly and for the periodic repression of histone gene transcription during the cell cycle. The protein is Protein HIR2 (HIR2) of Kluyveromyces lactis (strain ATCC 8585 / CBS 2359 / DSM 70799 / NBRC 1267 / NRRL Y-1140 / WM37) (Yeast).